We begin with the raw amino-acid sequence, 605 residues long: YTH domain-containing protein ECT4 (605 aa).

2 disordered regions span residues 249 to 274 (GVASSYSKANNNVPATRNQNSSSNSH) and 357 to 384 (ELNRGPRAKGTKATEEVSSEEVKKQTFD). Residues 256 to 274 (KANNNVPATRNQNSSSNSH) are compositionally biased toward polar residues. A compositionally biased stretch (basic and acidic residues) spans 368–383 (KATEEVSSEEVKKQTF). A YTH domain is found at 414-551 (AKFFIIKSYS…EQGLKVVKIF (138 aa)). Residues 420–422 (KSY), D426, 436–437 (WA), N469, W493, W498, and W506 contribute to the RNA site. Residues 580 to 605 (KQQQSQKQVWEGKTNDEKPGTVDSTM) are disordered.

Expressed in the shoot apex, at the sites of leaf formation, and in emerging leaves.

It is found in the cytoplasm. In terms of biological role, specifically recognizes and binds N6-methyladenosine (m6A)-containing RNAs, and regulates mRNA stability. M6A is a modification present at internal sites of mRNAs and some non-coding RNAs and plays a role in mRNA stability and processing. Required for the correct timing of leaf formation and normal leaf morphology. The chain is YTH domain-containing protein ECT4 from Arabidopsis thaliana (Mouse-ear cress).